Reading from the N-terminus, the 825-residue chain is Breast cancer anti-estrogen resistance protein 3 (825 aa).

Position 2 is an N-acetylalanine (Ala-2). Phosphoserine occurs at positions 32, 78, and 83. The interval 40-106 (DAYQDVSIHG…DRHGETFTFR (67 aa)) is disordered. A compositionally biased stretch (polar residues) spans 79–94 (PRQNSPVTQDGIQESP). Residues 95–106 (WQDRHGETFTFR) show a composition bias toward basic and acidic residues. An SH2 domain is found at 154–253 (WYHGRIPRQV…QSGAIIFQPI (100 aa)). Ser-182 and Ser-290 each carry phosphoserine. Position 334 is an N6-methyllysine (Lys-334). Residues Ser-358, Ser-363, and Ser-375 each carry the phosphoserine modification. The residue at position 442 (Arg-442) is an Omega-N-methylarginine. At Ser-471 the chain carries Phosphoserine. The Ras-GEF domain maps to 548 to 818 (DPKVIAQHVL…TALSRKLEPP (271 aa)). Residues 744–748 (LATAR) are mediates the interaction with BCAR1/p130CAS.

As to quaternary structure, part of a complex comprised of PTPRA, BCAR1, BCAR3 (via SH2 domain) and SRC; the formation of the complex is dependent on integrin mediated-tyrosine phosphorylation of PTPRA. Within the complex, interacts (via SH2 domain) with PTPRA (when phosphorylated on 'Tyr-798'). Interacts (via Ras-GEF domain) with BCAR1. Interacts (via Ras-GEF domain) with NEDD9. Interacts with PTK2/FAK1. Interacts with PTPN1. Interacts (via SH2 domain) with EGFR (when tyrosine-phosphorylated). Phosphorylated on tyrosine residues. Ubiquitously expressed. Found in several cancer cell lines, but not in nonmalignant breast tissue.

It is found in the cytoplasm. The protein localises to the cell junction. The protein resides in the focal adhesion. Its function is as follows. Acts as an adapter protein downstream of several growth factor receptors to promote cell proliferation, migration, and redistribution of actin fibers. Specifically involved in INS/insulin signaling pathway by mediating MAPK1/ERK2-MAPK3/ERK1 activation and DNA synthesis. Promotes insulin-mediated membrane ruffling. In response to vasoconstrictor peptide EDN1, involved in the activation of RAP1 downstream of PTK2B via interaction with phosphorylated BCAR1. Inhibits cell migration and invasion via regulation of TGFB-mediated matrix digestion, actin filament rearrangement, and inhibition of invadopodia activity. May inhibit TGFB-SMAD signaling, via facilitating BCAR1 and SMAD2 and/or SMAD3 interaction. Regulates EGF-induced DNA synthesis. Required for the maintenance of ocular lens morphology and structural integrity, potentially via regulation of focal adhesion complex signaling. Acts upstream of PTPRA to regulate the localization of BCAR1 and PTPRA to focal adhesions, via regulation of SRC-mediated phosphorylation of PTPRA. Positively regulates integrin-induced tyrosine phosphorylation of BCAR1. Acts as a guanine nucleotide exchange factor (GEF) for small GTPases RALA, RAP1A and RRAS. However, in a contrasting study, lacks GEF activity towards RAP1. The chain is Breast cancer anti-estrogen resistance protein 3 (BCAR3) from Homo sapiens (Human).